A 274-amino-acid polypeptide reads, in one-letter code: Large ribosomal subunit protein uL2 (274 aa).

Residues 223 to 274 (VAMNPVDHPHGGGEGRTGEGRHAVDPWGNLTKGYRTRNNKRTQSMIVSRRKK) are disordered. The segment covering 229-246 (DHPHGGGEGRTGEGRHAV) has biased composition (basic and acidic residues).

Belongs to the universal ribosomal protein uL2 family. Part of the 50S ribosomal subunit. Forms a bridge to the 30S subunit in the 70S ribosome.

Its function is as follows. One of the primary rRNA binding proteins. Required for association of the 30S and 50S subunits to form the 70S ribosome, for tRNA binding and peptide bond formation. It has been suggested to have peptidyltransferase activity; this is somewhat controversial. Makes several contacts with the 16S rRNA in the 70S ribosome. The protein is Large ribosomal subunit protein uL2 of Verminephrobacter eiseniae (strain EF01-2).